We begin with the raw amino-acid sequence, 130 residues long: Small ribosomal subunit protein uS9 (130 aa).

The protein belongs to the universal ribosomal protein uS9 family.

The protein is Small ribosomal subunit protein uS9 of Bacillus licheniformis (strain ATCC 14580 / DSM 13 / JCM 2505 / CCUG 7422 / NBRC 12200 / NCIMB 9375 / NCTC 10341 / NRRL NRS-1264 / Gibson 46).